We begin with the raw amino-acid sequence, 72 residues long: DNA-directed RNA polymerase subunit epsilon (72 aa).

It belongs to the RNA polymerase subunit epsilon family. As to quaternary structure, RNAP is composed of a core of 2 alpha, a beta and a beta' subunit. The core is associated with a delta subunit, and at least one of epsilon or omega. When a sigma factor is associated with the core the holoenzyme is formed, which can initiate transcription.

The catalysed reaction is RNA(n) + a ribonucleoside 5'-triphosphate = RNA(n+1) + diphosphate. A non-essential component of RNA polymerase (RNAP). The sequence is that of DNA-directed RNA polymerase subunit epsilon from Levilactobacillus brevis (strain ATCC 367 / BCRC 12310 / CIP 105137 / JCM 1170 / LMG 11437 / NCIMB 947 / NCTC 947) (Lactobacillus brevis).